Here is a 200-residue protein sequence, read N- to C-terminus: Transgelin (200 aa).

The residue at position 2 (Ala2) is an N-acetylalanine. A Calponin-homology (CH) domain is found at 24 to 137 (DELEDRLVEW…RTLVALGSLA (114 aa)). Residues 175 to 199 (IGLQMGTNKGASQAGMSYGRPRQII) form a Calponin-like repeat.

The protein belongs to the calponin family. In terms of assembly, monomer. Gizzard, uterus, intestine, esophagus, aorta, and trace amounts in brain, liver and heart.

It localises to the cytoplasm. Functionally, actin cross-linking/gelling protein. The chain is Transgelin (TAGLN) from Gallus gallus (Chicken).